Consider the following 384-residue polypeptide: Histidinol-phosphate aminotransferase (384 aa).

Lys223 carries the post-translational modification N6-(pyridoxal phosphate)lysine.

It belongs to the class-II pyridoxal-phosphate-dependent aminotransferase family. The cofactor is pyridoxal 5'-phosphate.

The enzyme catalyses L-histidinol phosphate + 2-oxoglutarate = 3-(imidazol-4-yl)-2-oxopropyl phosphate + L-glutamate. It functions in the pathway amino-acid biosynthesis; L-histidine biosynthesis; L-histidine from 5-phospho-alpha-D-ribose 1-diphosphate: step 7/9. This Schizosaccharomyces pombe (strain 972 / ATCC 24843) (Fission yeast) protein is Histidinol-phosphate aminotransferase (his3).